A 247-amino-acid polypeptide reads, in one-letter code: ATP synthase subunit a, chloroplastic (247 aa).

Helical transmembrane passes span 38–58, 95–115, 134–154, 199–219, and 220–240; these read QVLI…IVTV, VPFI…GALL, INTT…AGLS, LVVV…VMFL, and GLFT…AYIG.

This sequence belongs to the ATPase A chain family. As to quaternary structure, F-type ATPases have 2 components, CF(1) - the catalytic core - and CF(0) - the membrane proton channel. CF(1) has five subunits: alpha(3), beta(3), gamma(1), delta(1), epsilon(1). CF(0) has four main subunits: a, b, b' and c.

The protein localises to the plastid. Its subcellular location is the chloroplast thylakoid membrane. In terms of biological role, key component of the proton channel; it plays a direct role in the translocation of protons across the membrane. In Populus trichocarpa (Western balsam poplar), this protein is ATP synthase subunit a, chloroplastic.